Here is a 368-residue protein sequence, read N- to C-terminus: MAALGKAEESQGCFGLFLLLPGPSMQPRLFVLVALSVLLLSGRAGALTEGLYCGRQVCYDVLGVSRDASKGDIARAYRQLARKYHPDRYRPGEPPGPDGETRESAQEKFLLVATAYETLKDEETRKDYDYMLDHPEEYYRHYYHYYSRRLAPKVDVRIVILVSVCAISIFQYYSWWSSYNEAINYLATVTKYRIQAMEIAKQQGLLNRTKEKGKNRRSKEEIKSEEEEIIRDIIKNKIDIKGGYQKPQIFDILLFQIILFPYYIFKYISWYVHWIYTFNIQGKEYGEEEKLYLIRRNMKMSQSQFDTLEEHRKNSFLEQKLWIKENYEVYKLEQEEEMKKKMASDPRWKRYRRWMKNEGPGRLTFADD.

The chain crosses the membrane as a helical span at residues 25–47; that stretch reads MQPRLFVLVALSVLLLSGRAGAL. The J domain maps to 57-132; it reads VCYDVLGVSR…ETRKDYDYML (76 aa). Helical transmembrane passes span 158–178 and 252–272; these read IVIL…WWSS and ILLF…SWYV.

Belongs to the DNAJC25 family.

It localises to the membrane. The chain is DnaJ homolog subfamily C member 25 (dnajc25) from Xenopus tropicalis (Western clawed frog).